Consider the following 368-residue polypeptide: tRNA-specific 2-thiouridylase MnmA (368 aa).

Residues 11–18 (GMSGGVDS) and Met-37 contribute to the ATP site. The interaction with target base in tRNA stretch occupies residues 97–99 (NPD). Cys-102 acts as the Nucleophile in catalysis. Cys-102 and Cys-199 are disulfide-bonded. ATP is bound at residue Gly-127. Positions 149–151 (KDQ) are interaction with tRNA. Residue Cys-199 is the Cysteine persulfide intermediate of the active site. The interval 311–312 (RY) is interaction with tRNA.

This sequence belongs to the MnmA/TRMU family. In terms of assembly, interacts with TusE.

It localises to the cytoplasm. The enzyme catalyses S-sulfanyl-L-cysteinyl-[protein] + uridine(34) in tRNA + AH2 + ATP = 2-thiouridine(34) in tRNA + L-cysteinyl-[protein] + A + AMP + diphosphate + H(+). In terms of biological role, catalyzes the 2-thiolation of uridine at the wobble position (U34) of tRNA(Lys), tRNA(Glu) and tRNA(Gln), leading to the formation of s(2)U34, the first step of tRNA-mnm(5)s(2)U34 synthesis. Sulfur is provided by IscS, via a sulfur-relay system. Binds ATP and its substrate tRNAs. The sequence is that of tRNA-specific 2-thiouridylase MnmA from Shigella boydii serotype 4 (strain Sb227).